The sequence spans 156 residues: Small ribosomal subunit protein uS7A/uS7B (156 aa).

This sequence belongs to the universal ribosomal protein uS7 family. Part of the 30S ribosomal subunit. Contacts proteins S9 and S11.

Functionally, one of the primary rRNA binding proteins, it binds directly to 16S rRNA where it nucleates assembly of the head domain of the 30S subunit. Is located at the subunit interface close to the decoding center, probably blocks exit of the E-site tRNA. This is Small ribosomal subunit protein uS7A/uS7B from Cereibacter sphaeroides (strain ATCC 17029 / ATH 2.4.9) (Rhodobacter sphaeroides).